Here is a 313-residue protein sequence, read N- to C-terminus: tRNA dimethylallyltransferase (313 aa).

9 to 16 lines the ATP pocket; it reads GPTASGKT. 11 to 16 contacts substrate; it reads TASGKT. Residues 34–37 are interaction with substrate tRNA; sequence DSMQ.

This sequence belongs to the IPP transferase family. In terms of assembly, monomer. It depends on Mg(2+) as a cofactor.

It catalyses the reaction adenosine(37) in tRNA + dimethylallyl diphosphate = N(6)-dimethylallyladenosine(37) in tRNA + diphosphate. Functionally, catalyzes the transfer of a dimethylallyl group onto the adenine at position 37 in tRNAs that read codons beginning with uridine, leading to the formation of N6-(dimethylallyl)adenosine (i(6)A). The chain is tRNA dimethylallyltransferase from Acetivibrio thermocellus (strain ATCC 27405 / DSM 1237 / JCM 9322 / NBRC 103400 / NCIMB 10682 / NRRL B-4536 / VPI 7372) (Clostridium thermocellum).